We begin with the raw amino-acid sequence, 216 residues long: RNA pyrophosphohydrolase (216 aa).

Positions 6–149 (GFRPNVGIIL…KRDVYQLALT (144 aa)) constitute a Nudix hydrolase domain. The Nudix box motif lies at 38–59 (GGIKYGETPMQAMYRELHEETG). Residues 159–180 (AQRTDKSRGPRAPRYPRVSNGH) are disordered.

The protein belongs to the Nudix hydrolase family. RppH subfamily. A divalent metal cation is required as a cofactor.

Functionally, accelerates the degradation of transcripts by removing pyrophosphate from the 5'-end of triphosphorylated RNA, leading to a more labile monophosphorylated state that can stimulate subsequent ribonuclease cleavage. This Burkholderia thailandensis (strain ATCC 700388 / DSM 13276 / CCUG 48851 / CIP 106301 / E264) protein is RNA pyrophosphohydrolase.